We begin with the raw amino-acid sequence, 237 residues long: tRNA (guanine-N(7)-)-methyltransferase (237 aa).

S-adenosyl-L-methionine contacts are provided by glutamate 68, glutamate 93, aspartate 120, and aspartate 143. The active site involves aspartate 143. Residues lysine 147, aspartate 179, and 216-219 contribute to the substrate site; that span reads TKFE.

Belongs to the class I-like SAM-binding methyltransferase superfamily. TrmB family.

The enzyme catalyses guanosine(46) in tRNA + S-adenosyl-L-methionine = N(7)-methylguanosine(46) in tRNA + S-adenosyl-L-homocysteine. Its pathway is tRNA modification; N(7)-methylguanine-tRNA biosynthesis. In terms of biological role, catalyzes the formation of N(7)-methylguanine at position 46 (m7G46) in tRNA. In Shewanella pealeana (strain ATCC 700345 / ANG-SQ1), this protein is tRNA (guanine-N(7)-)-methyltransferase.